We begin with the raw amino-acid sequence, 481 residues long: Aspartyl/glutamyl-tRNA(Asn/Gln) amidotransferase subunit B (481 aa).

The protein belongs to the GatB/GatE family. GatB subfamily. Heterotrimer of A, B and C subunits.

It catalyses the reaction L-glutamyl-tRNA(Gln) + L-glutamine + ATP + H2O = L-glutaminyl-tRNA(Gln) + L-glutamate + ADP + phosphate + H(+). The enzyme catalyses L-aspartyl-tRNA(Asn) + L-glutamine + ATP + H2O = L-asparaginyl-tRNA(Asn) + L-glutamate + ADP + phosphate + 2 H(+). In terms of biological role, allows the formation of correctly charged Asn-tRNA(Asn) or Gln-tRNA(Gln) through the transamidation of misacylated Asp-tRNA(Asn) or Glu-tRNA(Gln) in organisms which lack either or both of asparaginyl-tRNA or glutaminyl-tRNA synthetases. The reaction takes place in the presence of glutamine and ATP through an activated phospho-Asp-tRNA(Asn) or phospho-Glu-tRNA(Gln). This Pseudomonas putida (strain ATCC 47054 / DSM 6125 / CFBP 8728 / NCIMB 11950 / KT2440) protein is Aspartyl/glutamyl-tRNA(Asn/Gln) amidotransferase subunit B.